We begin with the raw amino-acid sequence, 73 residues long: Putative defensin-like protein 33 (73 aa).

An N-terminal signal peptide occupies residues 1–25; the sequence is MASNKVSFIFILFLCVLSTAEFGEA. Intrachain disulfides connect cysteine 33–cysteine 59, cysteine 45–cysteine 68, and cysteine 49–cysteine 70.

The protein belongs to the DEFL family.

It localises to the secreted. The protein is Putative defensin-like protein 33 of Arabidopsis thaliana (Mouse-ear cress).